A 504-amino-acid chain; its full sequence is Probable periplasmic serine endoprotease DegP-like (504 aa).

A signal peptide spans 1–26 (MLKTTTVAGLAAVLLTTGLPAEVAQS). Over residues 102–118 (RADRWRDRRGPRGEGRL) the composition is skewed to basic and acidic residues. Positions 102-122 (RADRWRDRRGPRGEGRLRPRA) are disordered. Residues 113–286 (RGEGRLRPRA…PASVAKDVVD (174 aa)) are serine protease. Catalysis depends on charge relay system residues His-140, Asp-170, and Ser-244. Substrate is bound by residues 242–244 (GNS) and 299–303 (LGVQI). PDZ domains lie at 287 to 378 (SLIK…LWRS) and 401 to 491 (ATGE…IEAQ). 2 disordered regions span residues 389-411 (GTLPSDAKEPAPATGEAQPDEGQ) and 428-447 (EDGKGVTIASVDPDSDAGDR).

Belongs to the peptidase S1C family.

The protein resides in the periplasm. The enzyme catalyses Acts on substrates that are at least partially unfolded. The cleavage site P1 residue is normally between a pair of hydrophobic residues, such as Val-|-Val.. Functionally, might be efficient in the degradation of transiently denatured and unfolded proteins which accumulate in the periplasm following stress conditions. This is Probable periplasmic serine endoprotease DegP-like (degP1) from Rhizobium meliloti (strain 1021) (Ensifer meliloti).